A 156-amino-acid chain; its full sequence is Small ribosomal subunit protein uS7 (156 aa).

It belongs to the universal ribosomal protein uS7 family. As to quaternary structure, part of the 30S ribosomal subunit. Contacts proteins S9 and S11.

Functionally, one of the primary rRNA binding proteins, it binds directly to 16S rRNA where it nucleates assembly of the head domain of the 30S subunit. Is located at the subunit interface close to the decoding center, probably blocks exit of the E-site tRNA. The chain is Small ribosomal subunit protein uS7 from Vibrio parahaemolyticus serotype O3:K6 (strain RIMD 2210633).